Here is a 1413-residue protein sequence, read N- to C-terminus: ABC-type transporter vrcC (1413 aa).

The region spanning 108-365 is the ABC transporter 1 domain; it reads VWFEALALAR…FLDMGFACPE (258 aa). Residue Asn289 is glycosylated (N-linked (GlcNAc...) asparagine). Residues 476-496 traverse the membrane as a helical segment; the sequence is VTISSLIGNVITALVIASIFY. Asn501 is a glycosylation site (N-linked (GlcNAc...) asparagine). A run of 2 helical transmembrane segments spans residues 510–530 and 564–584; these read ALLF…MLTL and VLNA…VLLG. Asn675 carries an N-linked (GlcNAc...) asparagine glycan. A helical transmembrane segment spans residues 683–703; that stretch reads IGIILAFMVVLGAIYLVATDF. The interval 725–748 is disordered; sequence SGKPDDFEGGSDRNASQEKSKSDR. Asn738 carries an N-linked (GlcNAc...) asparagine glycan. The segment covering 739 to 748 has biased composition (basic and acidic residues); it reads ASQEKSKSDR. Positions 761 to 1003 constitute an ABC transporter 2 domain; sequence FQWQDVCFDI…ILIDYFVRNG (243 aa). The next 6 membrane-spanning stretches (helical) occupy residues 1105–1125, 1142–1162, 1191–1211, 1230–1250, 1266–1286, and 1290–1310; these read IYIY…GFSL, IFLL…HFVT, LFWN…PIGM, LLIW…IAAL, LCLL…FWIF, and VSPF…DTTV. N-linked (GlcNAc...) asparagine glycosylation occurs at Asn1324. A helical membrane pass occupies residues 1378–1398; sequence FGLMWVFIFTNIVAACLLYWW.

This sequence belongs to the ABC transporter superfamily. ABCG family. PDR (TC 3.A.1.205) subfamily.

Its subcellular location is the cell membrane. ABC-type transporter; part of the gene cluster that mediates the biosynthesis of the sesterterpene variecolin. VrcC is probably involved in the secretion of variecolin. In Aspergillus aculeatus (strain ATCC 16872 / CBS 172.66 / WB 5094), this protein is ABC-type transporter vrcC.